The chain runs to 535 residues: MALGAAPAAQLALLALLGTLLPGPGGAGISIHPSKAIIPRGDSLTVNCSNSCDQKSTFGLETVLIKEEVGRGDNWKVFQLRDVQEDIELFCYSNCHKEQTIASMNLTVYWFPEHVELAPLPLWQPVGEELNLSCLVSGGAPRAHLSVVLLRGEEELGRQPVGKGEPAKVMFTVQSRREDHGTNFSCRWELDLRSQGLELFQNTSAPRKLQTYVLPSIDPHLEVPPIVEVGSRWPVNCTLDGLFPASDAKVYLVLGDQKLESNITYDGDSVLAKAWMEENEEGTHSLKCSVTLGEVSRRTQENVTVYSFPLPTLTLSPPEVSEWTTVTVECVTRDGAVVKLNGTSAVPPGPRAQLKLNASASDHRSNFSCSAALEIAGQVVHKHQTLELHVLYGPRLDQRDCPGNWTWQEGSEQTLKCEAQGNPIPKLNCSRKGDGASLPIGDLRPVRREVAGTYLCRATSARGRVTREVVLNVLHGQNILDIVIPVVAVTLILGALGTAGYVYNYQRKIQKYELQKARKAQEEAALKLNAQSTPP.

Residues 1–27 form the signal peptide; the sequence is MALGAAPAAQLALLALLGTLLPGPGGA. The Extracellular portion of the chain corresponds to 28-480; it reads GISIHPSKAI…LNVLHGQNIL (453 aa). In terms of domain architecture, Ig-like C2-type 1 spans 41 to 102; the sequence is GDSLTVNCSN…SNCHKEQTIA (62 aa). Residue asparagine 47 is glycosylated (N-linked (GlcNAc...) asparagine). 2 disulfides stabilise this stretch: cysteine 48–cysteine 91 and cysteine 52–cysteine 95. N-linked (GlcNAc...) asparagine glycosylation is found at asparagine 105 and asparagine 131. The region spanning 127–193 is the Ig-like C2-type 2 domain; sequence GEELNLSCLV…FSCRWELDLR (67 aa). Cysteine 134 and cysteine 186 are oxidised to a cystine. A Cell attachment site; atypical motif is present at residues 151–153; that stretch reads RGE. Residues asparagine 183, asparagine 202, asparagine 236, asparagine 262, asparagine 302, asparagine 341, asparagine 357, asparagine 366, asparagine 404, and asparagine 428 are each glycosylated (N-linked (GlcNAc...) asparagine). The Ig-like C2-type 3 domain occupies 230–295; sequence GSRWPVNCTL…LKCSVTLGEV (66 aa). Cysteine 237 and cysteine 288 form a disulfide bridge. The Ig-like C2-type 4 domain occupies 323 to 376; the sequence is WTTVTVECVTRDGAVVKLNGTSAVPPGPRAQLKLNASASDHRSNFSCSAALEIA. 4 cysteine pairs are disulfide-bonded: cysteine 330/cysteine 369, cysteine 401/cysteine 417, cysteine 417/cysteine 456, and cysteine 429/cysteine 456. Residues 410 to 463 form the Ig-like C2-type 5 domain; sequence GSEQTLKCEAQGNPIPKLNCSRKGDGASLPIGDLRPVRREVAGTYLCRATSARG. The chain crosses the membrane as a helical span at residues 481 to 503; that stretch reads DIVIPVVAVTLILGALGTAGYVY. Over 504 to 535 the chain is Cytoplasmic; sequence NYQRKIQKYELQKARKAQEEAALKLNAQSTPP. A Phosphothreonine modification is found at threonine 533.

The protein belongs to the immunoglobulin superfamily. ICAM family. In terms of assembly, homodimer. Interacts with MUC1 and promotes cell aggregation in epithelial cells. Interacts with ARHGEF26/SGEF. Interacts (on T cell side) with CD81, CD247 and CD9 at immunological synapses between antigen-presenting cells and T cells. In terms of processing, monoubiquitinated, which is promoted by MARCH9 and leads to endocytosis.

The protein localises to the membrane. ICAM proteins are ligands for the leukocyte adhesion protein LFA-1 (integrin alpha-L/beta-2). During leukocyte trans-endothelial migration, ICAM1 engagement promotes the assembly of endothelial apical cups through ARHGEF26/SGEF and RHOG activation. The chain is Intercellular adhesion molecule 1 (ICAM1) from Bos taurus (Bovine).